The following is a 188-amino-acid chain: CMT1A duplicated region transcript 15 protein (188 aa).

In terms of tissue distribution, expressed in fetal heart, kidney, liver, lung and spleen.

The polypeptide is CMT1A duplicated region transcript 15 protein (CDRT15) (Homo sapiens (Human)).